The following is a 1175-amino-acid chain: DNA-directed RNA polymerase subunit beta (1175 aa).

Residues 1142–1175 are disordered; sequence PMELSGSDDDEFDQAGASLGINLSRDERSDADIA. Positions 1165–1175 are enriched in basic and acidic residues; it reads SRDERSDADIA.

The protein belongs to the RNA polymerase beta chain family. As to quaternary structure, the RNAP catalytic core consists of 2 alpha, 1 beta, 1 beta' and 1 omega subunit. When a sigma factor is associated with the core the holoenzyme is formed, which can initiate transcription.

The enzyme catalyses RNA(n) + a ribonucleoside 5'-triphosphate = RNA(n+1) + diphosphate. Its function is as follows. DNA-dependent RNA polymerase catalyzes the transcription of DNA into RNA using the four ribonucleoside triphosphates as substrates. This is DNA-directed RNA polymerase subunit beta from Corynebacterium diphtheriae (strain ATCC 700971 / NCTC 13129 / Biotype gravis).